The primary structure comprises 153 residues: Large ribosomal subunit protein eL15 (153 aa).

Residue lysine 32 forms a Glycyl lysine isopeptide (Lys-Gly) (interchain with G-Cter in SUMO2) linkage. Phosphoserine is present on residues serine 46 and serine 49. Residues 114–135 form a disordered region; that stretch reads TSAGRKSRGLGKGHKFHHTIGG. A compositionally biased stretch (basic residues) spans 118 to 131; sequence RKSRGLGKGHKFHH.

It belongs to the eukaryotic ribosomal protein eL15 family. As to quaternary structure, component of the large ribosomal subunit. Interacts with IFIT1 (via TPR repeats 1-4).

Its subcellular location is the cytoplasm. Functionally, component of the large ribosomal subunit. The ribosome is a large ribonucleoprotein complex responsible for the synthesis of proteins in the cell. The chain is Large ribosomal subunit protein eL15 (RPL15) from Sus scrofa (Pig).